We begin with the raw amino-acid sequence, 132 residues long: Small ribosomal subunit protein uS8c (132 aa).

Belongs to the universal ribosomal protein uS8 family. As to quaternary structure, part of the 30S ribosomal subunit.

The protein resides in the plastid. It is found in the chloroplast. In terms of biological role, one of the primary rRNA binding proteins, it binds directly to 16S rRNA central domain where it helps coordinate assembly of the platform of the 30S subunit. The sequence is that of Small ribosomal subunit protein uS8c (rps8) from Spirogyra maxima (Green alga).